We begin with the raw amino-acid sequence, 453 residues long: Serine/threonine-protein phosphatase 2A 55 kDa regulatory subunit B delta isoform (453 aa).

4 WD repeats span residues 32 to 71 (AEAD…KSRP), 97 to 138 (EIEE…KRAE), 181 to 219 (AHTY…RSFN), and 230 to 270 (ELTE…LCDR). Serine 285 bears the Phosphoserine mark. 3 WD repeats span residues 289 to 327 (EIIS…RPVE), 344 to 385 (ENDC…DVTL), and 420 to 452 (DFNK…QDKI). Tyrosine 305 carries the phosphotyrosine modification. Threonine 308 is subject to Phosphothreonine.

Belongs to the phosphatase 2A regulatory subunit B family. As to quaternary structure, PP2A consists of a common heterodimeric core enzyme, composed of a 36 kDa catalytic subunit (subunit C) and a 65 kDa constant regulatory subunit (PR65 or subunit A), that associates with a variety of regulatory subunits. Proteins that associate with the core dimer include three families of regulatory subunits B (the R2/B/PR55/B55, R3/B''/PR72/PR130/PR59 and R5/B'/B56 families), the 48 kDa variable regulatory subunit, viral proteins, and cell signaling molecules. Interacts with ENSA (when phosphorylated at 'Ser-67') and ARPP19 (when phosphorylated at 'Ser-62'), leading to inhibit PP2A activity. Interacts with IER5.

The protein localises to the cytoplasm. Its function is as follows. Substrate-recognition subunit of protein phosphatase 2A (PP2A) that plays a key role in cell cycle by controlling mitosis entry and exit. Involved in chromosome clustering during late mitosis by mediating dephosphorylation of MKI67. The activity of PP2A complexes containing PPP2R2D (PR55-delta) fluctuate during the cell cycle: the activity is high in interphase and low in mitosis. The chain is Serine/threonine-protein phosphatase 2A 55 kDa regulatory subunit B delta isoform (PPP2R2D) from Homo sapiens (Human).